We begin with the raw amino-acid sequence, 278 residues long: ABC transporter I family member 11, chloroplastic (278 aa).

A chloroplast-targeting transit peptide spans 1 to 49 (MAVSTFSSPTPVFGIAEPPASFSSTAIGWKQPLRFRRTKKPRVISCDYS). The ABC transporter domain occupies 51–278 (IEVRDVCYRP…GVLVAERPPL (228 aa)). 85 to 92 (GKSGSGKT) lines the ATP pocket.

Belongs to the ABC transporter superfamily. ABCI family.

The protein localises to the plastid. It is found in the chloroplast. In Arabidopsis thaliana (Mouse-ear cress), this protein is ABC transporter I family member 11, chloroplastic (ABCI11).